A 93-amino-acid chain; its full sequence is U12-lycotoxin-Ls1e (93 aa).

The N-terminal stretch at 1–18 (MKFAVILLFTLVVLAVAS) is a signal peptide. The propeptide occupies 19-38 (ESVEEDTREIDVEEFQEQQR).

This sequence belongs to the neurotoxin 31 family. Post-translationally, contains 5 disulfide bonds. Expressed by the venom gland.

The protein resides in the secreted. The polypeptide is U12-lycotoxin-Ls1e (Lycosa singoriensis (Wolf spider)).